The chain runs to 727 residues: 1,4-alpha-glucan branching enzyme GlgB (727 aa).

Aspartate 411 (nucleophile) is an active-site residue. Residue glutamate 464 is the Proton donor of the active site.

Belongs to the glycosyl hydrolase 13 family. GlgB subfamily. As to quaternary structure, monomer.

The enzyme catalyses Transfers a segment of a (1-&gt;4)-alpha-D-glucan chain to a primary hydroxy group in a similar glucan chain.. Its pathway is glycan biosynthesis; glycogen biosynthesis. Functionally, catalyzes the formation of the alpha-1,6-glucosidic linkages in glycogen by scission of a 1,4-alpha-linked oligosaccharide from growing alpha-1,4-glucan chains and the subsequent attachment of the oligosaccharide to the alpha-1,6 position. This Protochlamydia amoebophila (strain UWE25) protein is 1,4-alpha-glucan branching enzyme GlgB.